We begin with the raw amino-acid sequence, 273 residues long: NH(3)-dependent NAD(+) synthetase (273 aa).

Residue 47 to 54 (GISGGQDS) coordinates ATP. Mg(2+) is bound at residue Asp53. Residue Arg139 participates in deamido-NAD(+) binding. Residue Thr159 participates in ATP binding. Glu164 is a binding site for Mg(2+). Deamido-NAD(+) is bound by residues Lys172 and Asp179. ATP contacts are provided by Lys188 and Thr210. 259-260 (HK) serves as a coordination point for deamido-NAD(+).

This sequence belongs to the NAD synthetase family. In terms of assembly, homodimer.

It carries out the reaction deamido-NAD(+) + NH4(+) + ATP = AMP + diphosphate + NAD(+) + H(+). It participates in cofactor biosynthesis; NAD(+) biosynthesis; NAD(+) from deamido-NAD(+) (ammonia route): step 1/1. Functionally, catalyzes the ATP-dependent amidation of deamido-NAD to form NAD. Uses ammonia as a nitrogen source. This is NH(3)-dependent NAD(+) synthetase from Staphylococcus haemolyticus (strain JCSC1435).